The primary structure comprises 435 residues: uncharacterized protein (435 aa).

The F-box domain maps to 7–58 (PFPITKLPLVPRCKILKFFDYGDLLDISLCSKRMAQTVRDIHITADLHYLTL).

This is an uncharacterized protein from Caenorhabditis elegans.